We begin with the raw amino-acid sequence, 175 residues long: NADH-ubiquinone oxidoreductase chain 6 (175 aa).

Transmembrane regions (helical) follow at residues 1–21 (MMLY…VGFS), 25–45 (SPIY…GIVL), 47–67 (FGGS…MMVV), 88–108 (AVLG…YYVL), and 149–169 (YGTW…VVIM).

The protein belongs to the complex I subunit 6 family. As to quaternary structure, core subunit of respiratory chain NADH dehydrogenase (Complex I) which is composed of 45 different subunits.

Its subcellular location is the mitochondrion inner membrane. The enzyme catalyses a ubiquinone + NADH + 5 H(+)(in) = a ubiquinol + NAD(+) + 4 H(+)(out). In terms of biological role, core subunit of the mitochondrial membrane respiratory chain NADH dehydrogenase (Complex I) which catalyzes electron transfer from NADH through the respiratory chain, using ubiquinone as an electron acceptor. Essential for the catalytic activity and assembly of complex I. The chain is NADH-ubiquinone oxidoreductase chain 6 (MT-ND6) from Bos mutus grunniens (Wild yak).